The following is a 359-amino-acid chain: Peptide chain release factor 1 (359 aa).

Glutamine 235 is subject to N5-methylglutamine. Positions 283 to 305 (QKAESERSASRKTQVGSGDRSER) are disordered.

The protein belongs to the prokaryotic/mitochondrial release factor family. In terms of processing, methylated by PrmC. Methylation increases the termination efficiency of RF1.

The protein localises to the cytoplasm. Functionally, peptide chain release factor 1 directs the termination of translation in response to the peptide chain termination codons UAG and UAA. In Bartonella bacilliformis (strain ATCC 35685 / KC583 / Herrer 020/F12,63), this protein is Peptide chain release factor 1.